The sequence spans 415 residues: DNA primase DnaG (415 aa).

A Toprim domain is found at 171 to 250 (DAIIIVEGRA…AFSPRGKSVE (80 aa)). Glutamate 177, aspartate 219, and aspartate 221 together coordinate Mg(2+). The segment at 280 to 323 (ELPGDLGGRPARTAPAHDEGGNSDTTGKQAVSQKRIRDGTSKVP) is disordered. The span at 301–311 (NSDTTGKQAVS) shows a compositional bias: polar residues.

The protein belongs to the archaeal DnaG primase family. In terms of assembly, forms a ternary complex with MCM helicase and DNA. Requires Mg(2+) as cofactor.

It catalyses the reaction ssDNA + n NTP = ssDNA/pppN(pN)n-1 hybrid + (n-1) diphosphate.. Functionally, RNA polymerase that catalyzes the synthesis of short RNA molecules used as primers for DNA polymerase during DNA replication. The chain is DNA primase DnaG from Methanoregula boonei (strain DSM 21154 / JCM 14090 / 6A8).